We begin with the raw amino-acid sequence, 276 residues long: Large ribosomal subunit protein uL2 (276 aa).

Positions 221-276 (RGSAMNPNDHPHGGGEGRAPIGRKSPMTPWGKKARGVKTRDRKKASNALIIRRRKK) are disordered. Residues 252–276 (KKARGVKTRDRKKASNALIIRRRKK) are compositionally biased toward basic residues.

It belongs to the universal ribosomal protein uL2 family. In terms of assembly, part of the 50S ribosomal subunit. Forms a bridge to the 30S subunit in the 70S ribosome.

One of the primary rRNA binding proteins. Required for association of the 30S and 50S subunits to form the 70S ribosome, for tRNA binding and peptide bond formation. It has been suggested to have peptidyltransferase activity; this is somewhat controversial. Makes several contacts with the 16S rRNA in the 70S ribosome. This chain is Large ribosomal subunit protein uL2, found in Aster yellows witches'-broom phytoplasma (strain AYWB).